We begin with the raw amino-acid sequence, 336 residues long: Biotin synthase (336 aa).

In terms of domain architecture, Radical SAM core spans 54–281; it reads NAIQLSTLLS…KAMVRLSAGR (228 aa). Residues Cys-69, Cys-73, and Cys-76 each contribute to the [4Fe-4S] cluster site. The [2Fe-2S] cluster site is built by Cys-113, Cys-144, Cys-204, and Arg-276.

Belongs to the radical SAM superfamily. Biotin synthase family. As to quaternary structure, homodimer. Requires [4Fe-4S] cluster as cofactor. It depends on [2Fe-2S] cluster as a cofactor.

It carries out the reaction (4R,5S)-dethiobiotin + (sulfur carrier)-SH + 2 reduced [2Fe-2S]-[ferredoxin] + 2 S-adenosyl-L-methionine = (sulfur carrier)-H + biotin + 2 5'-deoxyadenosine + 2 L-methionine + 2 oxidized [2Fe-2S]-[ferredoxin]. Its pathway is cofactor biosynthesis; biotin biosynthesis; biotin from 7,8-diaminononanoate: step 2/2. Catalyzes the conversion of dethiobiotin (DTB) to biotin by the insertion of a sulfur atom into dethiobiotin via a radical-based mechanism. The protein is Biotin synthase of Burkholderia thailandensis (strain ATCC 700388 / DSM 13276 / CCUG 48851 / CIP 106301 / E264).